The following is a 105-amino-acid chain: Large ribosomal subunit protein uL24 (105 aa).

It belongs to the universal ribosomal protein uL24 family. As to quaternary structure, part of the 50S ribosomal subunit.

In terms of biological role, one of two assembly initiator proteins, it binds directly to the 5'-end of the 23S rRNA, where it nucleates assembly of the 50S subunit. One of the proteins that surrounds the polypeptide exit tunnel on the outside of the subunit. This is Large ribosomal subunit protein uL24 from Tolumonas auensis (strain DSM 9187 / NBRC 110442 / TA 4).